A 95-amino-acid chain; its full sequence is VSQLESAMESLIKVFHTYSSKEGDKYKLSKAELKSLLQGELNDFLSASKDPMVVEKIMSDLDENQDGEVDFQEFVVLVAALTVACNEFFIESMKN.

EF-hand domains lie at 12-47 (IKVF…FLSA) and 49-84 (KDPM…LTVA). K27, E32, D62, N64, D66, E68, and E73 together coordinate Ca(2+).

The protein belongs to the S-100 family. Dimer of either two alpha chains, or two beta chains, or one alpha and one beta chain. Also forms heterodimers with S100P. Interacts with AGER. Interacts with CAPZA1. Interacts with FKBP4. Interacts with RYR1 and RYR2. Interacts with CACYBP in a calcium-dependent manner. Interacts with PPP5C (via TPR repeats); the interaction is calcium-dependent and modulates PPP5C activity. Interacts with ATP2A2 and PLN in a Ca(2+)-dependent manner. Interacts with mitochondrial F1-ATPase subunits ATP5F1A and ATP5F1B; these interactions increase F1-ATPase activity. Post-translationally, glutathionylated; glutathionylation increases affinity to calcium about 10-fold.

It localises to the cytoplasm. Its subcellular location is the sarcoplasmic reticulum. The protein localises to the mitochondrion. Its function is as follows. Small calcium binding protein that plays important roles in several biological processes such as Ca(2+) homeostasis, chondrocyte biology and cardiomyocyte regulation. In response to an increase in intracellular Ca(2+) levels, binds calcium which triggers conformational changes. These changes allow interactions with specific target proteins and modulate their activity. Regulates a network in cardiomyocytes controlling sarcoplasmic reticulum Ca(2+) cycling and mitochondrial function through interaction with the ryanodine receptors RYR1 and RYR2, sarcoplasmic reticulum Ca(2+)-ATPase/ATP2A2 and mitochondrial F1-ATPase. Facilitates diastolic Ca(2+) dissociation and myofilament mechanics in order to improve relaxation during diastole. In Misgurnus fossilis (Weatherfish), this protein is Protein S100-A1 (s100a1).